A 76-amino-acid chain; its full sequence is Small ribosomal subunit protein bS18 (76 aa).

It belongs to the bacterial ribosomal protein bS18 family. Part of the 30S ribosomal subunit. Forms a tight heterodimer with protein bS6.

Binds as a heterodimer with protein bS6 to the central domain of the 16S rRNA, where it helps stabilize the platform of the 30S subunit. This Symbiobacterium thermophilum (strain DSM 24528 / JCM 14929 / IAM 14863 / T) protein is Small ribosomal subunit protein bS18.